The chain runs to 603 residues: Mitochondrial distribution and morphology protein 34 (603 aa).

Positions 1–205 (MAFNFNWSPL…SPEYQEIETE (205 aa)) constitute an SMP-LTD domain. A compositionally biased stretch (low complexity) spans 320–332 (KSGASSVASGSTG). Disordered stretches follow at residues 320–511 (KSGA…PLLR) and 558–603 (IARK…AYVA). Polar residues predominate over residues 333-351 (NETLSSRPTLASSYSTSAG). Basic and acidic residues predominate over residues 371–380 (VVDLRRKDGA). The span at 383–403 (GVSTEANTPLPSTQVSDTSSV) shows a compositional bias: polar residues. Residues 452–463 (PLLAPAPLIPNA) are compositionally biased toward low complexity. The segment covering 500–509 (RQAQQSTSPL) has biased composition (polar residues). Residues 558-570 (IARKVQEEKDKSS) show a composition bias toward basic and acidic residues.

It belongs to the MDM34 family. As to quaternary structure, component of the ER-mitochondria encounter structure (ERMES) or MDM complex, composed of mmm1, mdm10, mdm12 and mdm34.

Its subcellular location is the mitochondrion outer membrane. Functionally, component of the ERMES/MDM complex, which serves as a molecular tether to connect the endoplasmic reticulum (ER) and mitochondria. Components of this complex are involved in the control of mitochondrial shape and protein biogenesis, and function in nonvesicular lipid trafficking between the ER and mitochondria. Mdm34 is required for the interaction of the ER-resident membrane protein mmm1 and the outer mitochondrial membrane-resident beta-barrel protein mdm10. The sequence is that of Mitochondrial distribution and morphology protein 34 from Pyrenophora tritici-repentis (strain Pt-1C-BFP) (Wheat tan spot fungus).